We begin with the raw amino-acid sequence, 589 residues long: Pyruvate kinase (589 aa).

A substrate-binding site is contributed by R32. Residues N34, S36, D66, and T67 each contribute to the K(+) site. Residue N34–H37 participates in ATP binding. R73 and K157 together coordinate ATP. E223 lines the Mg(2+) pocket. G246, D247, and T279 together coordinate substrate. D247 is a binding site for Mg(2+).

This sequence belongs to the pyruvate kinase family. The protein in the C-terminal section; belongs to the PEP-utilizing enzyme family. In terms of assembly, homotetramer. The cofactor is Mg(2+). Requires K(+) as cofactor.

It carries out the reaction pyruvate + ATP = phosphoenolpyruvate + ADP + H(+). Its pathway is carbohydrate degradation; glycolysis; pyruvate from D-glyceraldehyde 3-phosphate: step 5/5. With respect to regulation, strongly activated by glucose-6-phosphate, ribose-5-phosphate and fructose-6-phosphate. Weak activator AMP and weak inhibitor fructose-1,6-bisphosphate can act as strong inhibitors in the presence of strong activators. The chain is Pyruvate kinase (pyk) from Lactobacillus delbrueckii subsp. bulgaricus.